Reading from the N-terminus, the 67-residue chain is Large ribosomal subunit protein uL29 (67 aa).

It belongs to the universal ribosomal protein uL29 family.

The protein is Large ribosomal subunit protein uL29 of Wolbachia pipientis subsp. Culex pipiens (strain wPip).